Reading from the N-terminus, the 269-residue chain is RBPJ-interacting and tubulin-associated protein 1 (269 aa).

The Nuclear export signal signature appears at 5 to 17; the sequence is VELAISGMQTLHV. Disordered stretches follow at residues 67-94 and 145-269; these read GTGV…TLTP and PATP…PPWK. The segment covering 79–93 has biased composition (low complexity); that stretch reads SCESTSSSGSTPTLT. Positions 92–108 match the Nuclear localization signal motif; sequence LTPRKKNKYRLISHTPS. The segment at 128–156 is interaction with RBPJ/RBPSUH; the sequence is WMARGDAAKLHALFWTPPATPRGSHSPRP. The tract at residues 156–269 is interaction with tubulin; it reads PRETPVRCVH…ATQKTKPPWK (114 aa). Composition is skewed to polar residues over residues 202–220 and 247–269; these read LTHP…SPCT and VSVS…PPWK.

Belongs to the RITA family. Interacts with RBPJ/RBPSUH.

It is found in the cytoplasm. It localises to the nucleus. The protein localises to the cytoskeleton. Its subcellular location is the microtubule organizing center. The protein resides in the centrosome. Functionally, tubulin-binding protein that acts as a negative regulator of Notch signaling pathway. Shuttles between the cytoplasm and the nucleus and mediates the nuclear export of RBPJ/RBPSUH, thereby preventing the interaction between RBPJ/RBPSUH and NICD product of Notch proteins (Notch intracellular domain), leading to down-regulate Notch-mediated transcription. May play a role in neurogenesis. The protein is RBPJ-interacting and tubulin-associated protein 1 (RITA1) of Bos taurus (Bovine).